The sequence spans 345 residues: Glycerol-3-phosphate dehydrogenase [NAD(P)+] (345 aa).

Ser-23, Tyr-24, His-44, and Lys-118 together coordinate NADPH. Positions 118, 147, and 149 each coordinate sn-glycerol 3-phosphate. NADPH is bound at residue Ala-151. Residues Lys-203, Asp-256, Ser-266, Arg-267, and Asn-268 each coordinate sn-glycerol 3-phosphate. The active-site Proton acceptor is Lys-203. Arg-267 provides a ligand contact to NADPH. NADPH-binding residues include Val-291 and Glu-293.

Belongs to the NAD-dependent glycerol-3-phosphate dehydrogenase family.

The protein localises to the cytoplasm. It catalyses the reaction sn-glycerol 3-phosphate + NAD(+) = dihydroxyacetone phosphate + NADH + H(+). It carries out the reaction sn-glycerol 3-phosphate + NADP(+) = dihydroxyacetone phosphate + NADPH + H(+). The protein operates within membrane lipid metabolism; glycerophospholipid metabolism. Its function is as follows. Catalyzes the reduction of the glycolytic intermediate dihydroxyacetone phosphate (DHAP) to sn-glycerol 3-phosphate (G3P), the key precursor for phospholipid synthesis. The protein is Glycerol-3-phosphate dehydrogenase [NAD(P)+] of Vibrio campbellii (strain ATCC BAA-1116).